A 318-amino-acid chain; its full sequence is Very-long-chain 3-oxoacyl-CoA reductase-B (318 aa).

A helical transmembrane segment spans residues 15 to 35; it reads FWYLGVVAATWWGLRAAWCLL. 54-83 is a binding site for NADP(+); the sequence is GKWAVVTGATDGIGKAYAEELARRGMNIVL. 2 helical membrane-spanning segments follow: residues 187 to 207 and 281 to 301; these read GVVL…LTVY and AITG…SMGM. Ser194 is a substrate binding site. The active-site Proton acceptor is the Tyr207.

It belongs to the short-chain dehydrogenases/reductases (SDR) family. 17-beta-HSD 3 subfamily.

It localises to the endoplasmic reticulum membrane. It catalyses the reaction a very-long-chain (3R)-3-hydroxyacyl-CoA + NADP(+) = a very-long-chain 3-oxoacyl-CoA + NADPH + H(+). The catalysed reaction is 17beta-estradiol + NAD(+) = estrone + NADH + H(+). It carries out the reaction 17beta-estradiol + NADP(+) = estrone + NADPH + H(+). The protein operates within lipid metabolism; fatty acid biosynthesis. It functions in the pathway steroid biosynthesis; estrogen biosynthesis. Its function is as follows. Catalyzes the second of the four reactions of the long-chain fatty acids elongation cycle. This endoplasmic reticulum-bound enzymatic process, allows the addition of two carbons to the chain of long- and very long-chain fatty acids/VLCFAs per cycle. This enzyme has a 3-ketoacyl-CoA reductase activity, reducing 3-ketoacyl-CoA to 3-hydroxyacyl-CoA, within each cycle of fatty acid elongation. Thereby, it may participate in the production of VLCFAs of different chain lengths that are involved in multiple biological processes as precursors of membrane lipids and lipid mediators. May also catalyze the transformation of estrone (E1) into estradiol (E2) and play a role in estrogen formation. The polypeptide is Very-long-chain 3-oxoacyl-CoA reductase-B (hsd17b12-b) (Xenopus laevis (African clawed frog)).